The following is a 319-amino-acid chain: Cytochrome c biogenesis protein CcsA (319 aa).

Helical transmembrane passes span 9–29, 44–64, 71–91, 143–163, 225–245, 259–273, and 286–306; these read ILTHISFSLVSIGITIFLITL, GVIGTFLCITGLLVTRWAYSG, LYESLLFLSWSFAIIHMFPYL, MVLGYAALLCGSLLSVALLVI, IISLGFIFLTIGILSGAVWAN, TWAFITWTMFAIYLH, and AIVAFLGFIIIWICYFGVNLL.

Belongs to the CcmF/CycK/Ccl1/NrfE/CcsA family. As to quaternary structure, may interact with Ccs1.

It is found in the plastid. The protein localises to the chloroplast thylakoid membrane. Its function is as follows. Required during biogenesis of c-type cytochromes (cytochrome c6 and cytochrome f) at the step of heme attachment. The polypeptide is Cytochrome c biogenesis protein CcsA (Oenothera parviflora (Small-flowered evening primrose)).